Consider the following 97-residue polypeptide: Small ribosomal subunit protein bS20 (97 aa).

It belongs to the bacterial ribosomal protein bS20 family.

Functionally, binds directly to 16S ribosomal RNA. The chain is Small ribosomal subunit protein bS20 from Prochlorococcus marinus (strain MIT 9312).